The primary structure comprises 412 residues: Aspartate kinase Ask_LysC (412 aa).

Positions 265–332 constitute an ACT domain; that stretch reads LTIRGVPDTP…QGIAAEMGAR (68 aa).

This sequence belongs to the aspartokinase family.

Its subcellular location is the cytoplasm. It carries out the reaction L-aspartate + ATP = 4-phospho-L-aspartate + ADP. It participates in amino-acid biosynthesis; L-lysine biosynthesis via DAP pathway; (S)-tetrahydrodipicolinate from L-aspartate: step 1/4. It functions in the pathway amino-acid biosynthesis; L-methionine biosynthesis via de novo pathway; L-homoserine from L-aspartate: step 1/3. Its pathway is amino-acid biosynthesis; L-threonine biosynthesis; L-threonine from L-aspartate: step 1/5. Allosterically and strongly feedback inhibited by tryptophan. Addition of lysine alone slightly enhances activity. The simultaneous addition of lysine and tryptophan leads to very strong feedback inhibition of the enzyme. The feedback control by tryptophan is reduced in the presence of the compatible solutes hydroxyectoine or ectoine. In terms of biological role, involved in the biosynthesis of L-aspartate-beta-semialdehyde which is a central intermediate in the biosynthesis of different amino acids (L-lysine, L-methionine, L-threonine). Catalyzes the phosphorylation of the beta-carboxyl group of L-aspartate to yield 4-phospho-L-aspartate. The polypeptide is Aspartate kinase Ask_LysC (lysC) (Stutzerimonas stutzeri (strain A1501) (Pseudomonas stutzeri)).